A 338-amino-acid chain; its full sequence is MKVFYDKDADLSLIKGKQVTIIGYGSQGHAHALNLKDSGVNVTVGLRRGGASWSKAENAGLAVKEVAEAVKGADVVMMLLPDEQIAAVYAQEVHANIKEGATLAFAHGFNVHYGQVIPRADLDVIMVAPKAPGHTVRGTYAQGGGVPHLIAVAQDKSGAARDIALSYAAANGGGRAGIIETNFREETETDLFGEQAVLCGGTVELIKAGFETLVEAGYAPEMAYFECLHELKLIVDLIYEGGIANMNYSISNNAEYGEYVTGPRVVTEETKKAMKQCLTDIQTGEYAKSFILENKAGAPTLQSRRRLTAEHQIEQVGSKLRAMMPWIAKNKLVDQSKN.

The KARI N-terminal Rossmann domain maps to 1 to 181 (MKVFYDKDAD…GGGRAGIIET (181 aa)). Residues 24–27 (YGSQ), Arg47, and Ser52 each bind NADP(+). The active site involves His107. Gly133 provides a ligand contact to NADP(+). One can recognise a KARI C-terminal knotted domain in the interval 182-327 (NFREETETDL…SKLRAMMPWI (146 aa)). Asp190, Glu194, Glu226, and Glu230 together coordinate Mg(2+). Residue Ser251 coordinates substrate.

The protein belongs to the ketol-acid reductoisomerase family. It depends on Mg(2+) as a cofactor.

It catalyses the reaction (2R)-2,3-dihydroxy-3-methylbutanoate + NADP(+) = (2S)-2-acetolactate + NADPH + H(+). It carries out the reaction (2R,3R)-2,3-dihydroxy-3-methylpentanoate + NADP(+) = (S)-2-ethyl-2-hydroxy-3-oxobutanoate + NADPH + H(+). It participates in amino-acid biosynthesis; L-isoleucine biosynthesis; L-isoleucine from 2-oxobutanoate: step 2/4. It functions in the pathway amino-acid biosynthesis; L-valine biosynthesis; L-valine from pyruvate: step 2/4. Involved in the biosynthesis of branched-chain amino acids (BCAA). Catalyzes an alkyl-migration followed by a ketol-acid reduction of (S)-2-acetolactate (S2AL) to yield (R)-2,3-dihydroxy-isovalerate. In the isomerase reaction, S2AL is rearranged via a Mg-dependent methyl migration to produce 3-hydroxy-3-methyl-2-ketobutyrate (HMKB). In the reductase reaction, this 2-ketoacid undergoes a metal-dependent reduction by NADPH to yield (R)-2,3-dihydroxy-isovalerate. In Burkholderia thailandensis (strain ATCC 700388 / DSM 13276 / CCUG 48851 / CIP 106301 / E264), this protein is Ketol-acid reductoisomerase (NADP(+)).